Reading from the N-terminus, the 445-residue chain is Vacuolar fusion protein CCZ1 homolog (445 aa).

The protein belongs to the CCZ1 family.

The sequence is that of Vacuolar fusion protein CCZ1 homolog from Dictyostelium discoideum (Social amoeba).